Here is a 294-residue protein sequence, read N- to C-terminus: MKSFVFFAACMAIIALSSLVQAYPQKLPVPIPPPTNPPVAAFHNSVATNSKGGQDVSVKLAATNLGNKHVQPIAEVFAEGNTKGGNVLRGATVGVQGHGLGASVTKSQDGIAESFRKQAEANLRLGDSASLIGKVSQTDTKIKGIDFKPQLSSSSLALQGDRLGASISRDVNRGVSDTLTKSVSANLFRNDNHNLDASVFRSDVRQNNGFNFQKTGGMLDYSHANGHGLNAGLTRFSGIGNQATVGGYSTLFRSNDGLTSLKANAGGSQWLSGPFANQRDYSFGLGLSHNAWRG.

The first 22 residues, 1 to 22, serve as a signal peptide directing secretion; it reads MKSFVFFAACMAIIALSSLVQA. The propeptide at 23–24 is removed by a dipeptidylpeptidase; that stretch reads YP. The residue at position 25 (Gln25) is a Pyrrolidone carboxylic acid. Position 293 is an arginine amide (Arg293).

It belongs to the attacin/sarcotoxin-2 family. In terms of tissue distribution, synthesized by the fat body and is eventually secreted into the hemolymph.

The protein resides in the secreted. Sarcotoxin II is an antibacterial protein which plays a role in the inflammatory response of this insect. The main effect of sarcotoxin II on E.coli may be the inhibition of cell wall synthesis, including septum formation. This chain is Sarcotoxin-2A, found in Sarcophaga peregrina (Flesh fly).